A 180-amino-acid chain; its full sequence is Endoribonuclease YbeY (180 aa).

Zn(2+)-binding residues include His118, His122, and His128.

It belongs to the endoribonuclease YbeY family. The cofactor is Zn(2+).

The protein resides in the cytoplasm. Its function is as follows. Single strand-specific metallo-endoribonuclease involved in late-stage 70S ribosome quality control and in maturation of the 3' terminus of the 16S rRNA. The polypeptide is Endoribonuclease YbeY (Rhodococcus erythropolis (strain PR4 / NBRC 100887)).